The following is a 365-amino-acid chain: Mannitol dehydrogenase (365 aa).

Zn(2+) contacts are provided by Cys-50, His-72, Cys-103, Cys-106, Cys-109, Cys-117, and Cys-166.

Belongs to the zinc-containing alcohol dehydrogenase family. Requires Zn(2+) as cofactor.

It localises to the cytoplasm. The catalysed reaction is D-mannitol + NAD(+) = D-mannose + NADH + H(+). In terms of biological role, oxidizes mannitol to mannose. Provides the initial step by which translocated mannitol is committed to central metabolism and, by regulating mannitol pool size, is important in regulating salt tolerance at the cellular level. This is Mannitol dehydrogenase (MTD) from Apium graveolens (Celery).